Consider the following 324-residue polypeptide: R2-like ligand binding oxidase (324 aa).

Mn(2+) contacts are provided by glutamate 79, glutamate 112, and histidine 115. The segment at residues 82–173 is a cross-link (3-(O4'-tyrosyl)-valine (Val-Tyr)); that stretch reads VTEDIQPFMK…VNQVRASVTY (92 aa). Residue glutamate 112 coordinates Fe cation. Fe cation-binding residues include glutamate 178, glutamate 213, and histidine 216. The segment at 304 to 324 is disordered; the sequence is PEALEEKFGEEDAKAMSEAAG. Residues 307–318 show a composition bias toward basic and acidic residues; sequence LEEKFGEEDAKA.

The protein belongs to the ribonucleoside diphosphate reductase small chain family. R2-like ligand binding oxidase subfamily. Homodimer. The cofactor is Fe cation. Mn(2+) is required as a cofactor.

In terms of biological role, probable oxidase. This is R2-like ligand binding oxidase from Rhodococcus jostii (strain RHA1).